A 169-amino-acid polypeptide reads, in one-letter code: Ureidoglycolate lyase (169 aa).

Belongs to the ureidoglycolate lyase family. In terms of assembly, homodimer. It depends on Ni(2+) as a cofactor.

The catalysed reaction is (S)-ureidoglycolate = urea + glyoxylate. It functions in the pathway nitrogen metabolism; (S)-allantoin degradation. Its function is as follows. Catalyzes the catabolism of the allantoin degradation intermediate (S)-ureidoglycolate, generating urea and glyoxylate. Involved in the utilization of allantoin as nitrogen source. This is Ureidoglycolate lyase from Pseudomonas aeruginosa (strain LESB58).